The sequence spans 310 residues: 1-aminocyclopropane-1-carboxylate oxidase 1 (310 aa).

The stretch at 113–133 (EELSKTMDEYVCQLHKFAERL) forms a coiled coil. Residues 158 to 259 (PAFGTKVAKY…RLSIATFYNP (102 aa)) form the Fe2OG dioxygenase domain. The Fe cation site is built by histidine 182, aspartate 184, and histidine 240. Arginine 250 is a binding site for 2-oxoglutarate.

This sequence belongs to the iron/ascorbate-dependent oxidoreductase family. Fe(2+) serves as cofactor.

It carries out the reaction 1-aminocyclopropane-1-carboxylate + L-ascorbate + O2 = ethene + L-dehydroascorbate + hydrogen cyanide + CO2 + 2 H2O. It participates in alkene biosynthesis; ethylene biosynthesis via S-adenosyl-L-methionine; ethylene from S-adenosyl-L-methionine: step 2/2. In terms of biological role, enzyme involved in the ethylene biosynthesis. May promote stem elongation by maximizing the extensibility cells, possibly by activating ethylene biosynthesis, in response to very-long-chain fatty acids (VLCFAs C20:0 to C30:0). The protein is 1-aminocyclopropane-1-carboxylate oxidase 1 (ACO1) of Arabidopsis thaliana (Mouse-ear cress).